We begin with the raw amino-acid sequence, 292 residues long: Bifunctional protein FolD (292 aa).

NADP(+) contacts are provided by residues 166-168 (GRS), S191, and I232.

Belongs to the tetrahydrofolate dehydrogenase/cyclohydrolase family. In terms of assembly, homodimer.

The enzyme catalyses (6R)-5,10-methylene-5,6,7,8-tetrahydrofolate + NADP(+) = (6R)-5,10-methenyltetrahydrofolate + NADPH. It catalyses the reaction (6R)-5,10-methenyltetrahydrofolate + H2O = (6R)-10-formyltetrahydrofolate + H(+). It functions in the pathway one-carbon metabolism; tetrahydrofolate interconversion. Catalyzes the oxidation of 5,10-methylenetetrahydrofolate to 5,10-methenyltetrahydrofolate and then the hydrolysis of 5,10-methenyltetrahydrofolate to 10-formyltetrahydrofolate. In Wolbachia pipientis wMel, this protein is Bifunctional protein FolD.